The sequence spans 226 residues: MTSRTAQVSRITNETKIQISISLTGGPIERPQPSLFASEKGANTAGPDDASQTTASQTIDIHTGVGFLDHMIHALAKHAGWSLIVECIGDLHIDDHHTTEDCGIALGEAFKEALGAVRGIKRFGSGFAPLDEALSRAVVDISNRPLAVIELGLKRERIGDLSCEMIPHFLESFAEAARITLHVDCLRGFNDHHRSESAFKALAVAIREAISSNGTNDVPSTKGVLM.

A disordered region spans residues 23–55; that stretch reads LTGGPIERPQPSLFASEKGANTAGPDDASQTTA.

It belongs to the imidazoleglycerol-phosphate dehydratase family.

The catalysed reaction is D-erythro-1-(imidazol-4-yl)glycerol 3-phosphate = 3-(imidazol-4-yl)-2-oxopropyl phosphate + H2O. Its pathway is amino-acid biosynthesis; L-histidine biosynthesis; L-histidine from 5-phospho-alpha-D-ribose 1-diphosphate: step 6/9. This is Imidazoleglycerol-phosphate dehydratase (HIS3) from Maudiozyma humilis (Sour dough yeast).